The primary structure comprises 145 residues: uncharacterized protein (145 aa).

Positions methionine 1–glutamate 18 are enriched in basic and acidic residues. The disordered stretch occupies residues methionine 1–aspartate 61.

This is an uncharacterized protein from Caenorhabditis elegans.